Here is a 250-residue protein sequence, read N- to C-terminus: Corrinoid adenosyltransferase MMAB (250 aa).

A mitochondrion-targeting transit peptide spans 1–32 (MAVCGLGSRLGLGSRLGLRGCFGAARLLYPRF). A disordered region spans residues 34–59 (SRGPQGVEDGDRPQPSSKTPRIPKIY). Residues 60–63 (TKTG), 68–69 (SS), and Lys-78 each bind ATP. Ser-134 bears the Phosphoserine mark. 190 to 194 (RRAER) lines the ATP pocket. Lys-211 carries the post-translational modification N6-succinyllysine. Asn-214 lines the ATP pocket. N6-acetyllysine; alternate is present on Lys-230. Lys-230 is subject to N6-succinyllysine; alternate.

The protein belongs to the Cob(I)alamin adenosyltransferase family. As to quaternary structure, homotrimer. Expressed in liver and skeletal muscle.

Its subcellular location is the mitochondrion. It catalyses the reaction cob(I)alamin-[corrinoid adenosyltransferase] + ATP = apo-[corrinoid adenosyltransferase] + adenosylcob(III)alamin + triphosphate. Converts cob(I)alamin to adenosylcobalamin (adenosylcob(III)alamin), a coenzyme for methylmalonyl-CoA mutase, therefore participates in the final step of the vitamin B12 conversion. Generates adenosylcobalamin (AdoCbl) and directly delivers the cofactor to MUT in a transfer that is stimulated by ATP-binding to MMAB and gated by MMAA. In Homo sapiens (Human), this protein is Corrinoid adenosyltransferase MMAB.